The primary structure comprises 583 residues: Peptidyl-prolyl cis-trans isomerase FKBP10 (583 aa).

An N-terminal signal peptide occupies residues 1–27 (MLRAGPPSHTLLRLPLLQLLLLLLVQA). 4 consecutive PPIase FKBP-type domains span residues 63 to 151 (GDFV…LDVW), 175 to 263 (SDFV…IDVH), 287 to 375 (GDFM…IDFH), and 400 to 487 (GDFV…VSRE). N-linked (GlcNAc...) asparagine glycans are attached at residues asparagine 71, asparagine 183, and asparagine 295. 2 consecutive EF-hand domains span residues 498–533 (WHED…QVSE) and 543–578 (DPEK…DQDR). Ca(2+) contacts are provided by aspartate 511, asparagine 513, aspartate 515, glutamate 517, glutamate 522, aspartate 556, asparagine 558, aspartate 560, lysine 562, and glutamate 567. The segment at 534–583 (GKGRLLPGQDPEKTIGDMFQNQDRNQDGKITAEELKLKSDEDQDRVHEEL) is disordered. Over residues 557 to 583 (RNQDGKITAEELKLKSDEDQDRVHEEL) the composition is skewed to basic and acidic residues. Positions 580-583 (HEEL) match the Prevents secretion from ER motif.

In terms of processing, glycosylated and phosphorylated.

It is found in the endoplasmic reticulum lumen. The catalysed reaction is [protein]-peptidylproline (omega=180) = [protein]-peptidylproline (omega=0). Inhibited by both FK506 and rapamycin, but not by cyclosporin A. PPIases accelerate the folding of proteins during protein synthesis. This is Peptidyl-prolyl cis-trans isomerase FKBP10 (FKBP10) from Bos taurus (Bovine).